The primary structure comprises 223 residues: Ribose-5-phosphate isomerase A (223 aa).

Substrate is bound by residues threonine 32–threonine 35, aspartate 83–aspartate 86, and lysine 96–glycine 99. Glutamate 105 serves as the catalytic Proton acceptor. Residue lysine 123 coordinates substrate.

Belongs to the ribose 5-phosphate isomerase family. Homodimer.

It catalyses the reaction aldehydo-D-ribose 5-phosphate = D-ribulose 5-phosphate. It functions in the pathway carbohydrate degradation; pentose phosphate pathway; D-ribose 5-phosphate from D-ribulose 5-phosphate (non-oxidative stage): step 1/1. In terms of biological role, catalyzes the reversible conversion of ribose-5-phosphate to ribulose 5-phosphate. The chain is Ribose-5-phosphate isomerase A from Acinetobacter baumannii (strain SDF).